Reading from the N-terminus, the 257-residue chain is Phosphonates import ATP-binding protein PhnC (257 aa).

The ABC transporter domain maps to 2-246 (IEFRNVSKVY…KFAEIYGDVA (245 aa)). ATP is bound at residue 35 to 42 (GLSGAGKS).

This sequence belongs to the ABC transporter superfamily. Phosphonates importer (TC 3.A.1.9.1) family. In terms of assembly, the complex is composed of two ATP-binding proteins (PhnC), two transmembrane proteins (PhnE) and a solute-binding protein (PhnD).

Its subcellular location is the cell membrane. The enzyme catalyses phosphonate(out) + ATP + H2O = phosphonate(in) + ADP + phosphate + H(+). Functionally, part of the ABC transporter complex PhnCDE involved in phosphonates import. Responsible for energy coupling to the transport system. This chain is Phosphonates import ATP-binding protein PhnC, found in Bacillus cereus (strain ATCC 10987 / NRS 248).